The following is a 585-amino-acid chain: Aspartate--tRNA(Asp/Asn) ligase (585 aa).

E173 is a binding site for L-aspartate. The aspartate stretch occupies residues 197–200 (QLFK). L-aspartate is bound at residue R219. Residues 219–221 (RDE) and Q228 contribute to the ATP site. L-aspartate is bound at residue H447. Position 477 (E477) interacts with ATP. Residue R484 participates in L-aspartate binding. 529–532 (GFDR) lines the ATP pocket.

This sequence belongs to the class-II aminoacyl-tRNA synthetase family. Type 1 subfamily. Homodimer.

The protein localises to the cytoplasm. The catalysed reaction is tRNA(Asx) + L-aspartate + ATP = L-aspartyl-tRNA(Asx) + AMP + diphosphate. In terms of biological role, aspartyl-tRNA synthetase with relaxed tRNA specificity since it is able to aspartylate not only its cognate tRNA(Asp) but also tRNA(Asn). Reaction proceeds in two steps: L-aspartate is first activated by ATP to form Asp-AMP and then transferred to the acceptor end of tRNA(Asp/Asn). This is Aspartate--tRNA(Asp/Asn) ligase from Campylobacter concisus (strain 13826).